The following is a 197-amino-acid chain: Probable GTP-binding protein EngB (197 aa).

The region spanning 22–195 (GYPEIALVGR…WNWIEAQAFG (174 aa)) is the EngB-type G domain. Residues 30-37 (GRSNVGKS), 57-61 (GKTQT), 75-78 (DVPG), 142-145 (TKSD), and 174-176 (FSA) contribute to the GTP site. Residues Ser37 and Thr59 each contribute to the Mg(2+) site.

It belongs to the TRAFAC class TrmE-Era-EngA-EngB-Septin-like GTPase superfamily. EngB GTPase family. Mg(2+) is required as a cofactor.

Functionally, necessary for normal cell division and for the maintenance of normal septation. This chain is Probable GTP-binding protein EngB, found in Levilactobacillus brevis (strain ATCC 367 / BCRC 12310 / CIP 105137 / JCM 1170 / LMG 11437 / NCIMB 947 / NCTC 947) (Lactobacillus brevis).